The primary structure comprises 446 residues: MREIVHIQAGQCGNQIGGKFWEVISDEHCIDATGTYYGDSDLQLERINVYYNEATGAKYVPRAILVDLEPGTMDSVRSGRFGQIFRPDNFVFGQSGAGNNWAKGHYTEGAELVDSVLDVVRKESEGCDCLQGFQLTHSLGGGTGSGMGTLLISKIREEYPDRIMNTFSVVPSPKVSDTVVEPYNATLSVHQLVENTDETYCIDNEALYDICFRTLKLTTPTYGDLNHLVSATMSGVTTCLRFPGQLNADLRKLAVNMVPFPRLHFFMPGFAPLTSRGSQQYRALTVPELTQQMFDAKNMMAACDPRHGRYLTVAAIFRGRMSMKEVDEQMLNIQNKNSSFFVEWIPNNCKTAVCDIPPRGLKMSATFIGNSTAIQELFKRVSEQFTAMFRRKAFLHWYTGEGMDEMEFTEAESNMNDLVSEYQQYQEATADEEGEFDEDEEGGGDE.

Residues Q11, E69, S138, G142, T143, G144, N204, and N226 each contribute to the GTP site. Residue E69 participates in Mg(2+) binding. The disordered stretch occupies residues 424-446 (QYQEATADEEGEFDEDEEGGGDE). The span at 429–446 (TADEEGEFDEDEEGGGDE) shows a compositional bias: acidic residues.

It belongs to the tubulin family. In terms of assembly, dimer of alpha and beta chains. A typical microtubule is a hollow water-filled tube with an outer diameter of 25 nm and an inner diameter of 15 nM. Alpha-beta heterodimers associate head-to-tail to form protofilaments running lengthwise along the microtubule wall with the beta-tubulin subunit facing the microtubule plus end conferring a structural polarity. Microtubules usually have 13 protofilaments but different protofilament numbers can be found in some organisms and specialized cells. The cofactor is Mg(2+).

It is found in the cytoplasm. Its subcellular location is the cytoskeleton. Tubulin is the major constituent of microtubules, a cylinder consisting of laterally associated linear protofilaments composed of alpha- and beta-tubulin heterodimers. Microtubules grow by the addition of GTP-tubulin dimers to the microtubule end, where a stabilizing cap forms. Below the cap, tubulin dimers are in GDP-bound state, owing to GTPase activity of alpha-tubulin. This is Tubulin beta-2 chain (betaTub85D) from Drosophila erecta (Fruit fly).